The primary structure comprises 1283 residues: Rab11 family-interacting protein 1 (1283 aa).

Residues 1 to 126 (MSLMVSAGRG…DQGRRKTQWY (126 aa)) form the C2 domain. The segment covering 161-185 (SMKDKSRNPFGKLKDKIKGKNKDSG) has biased composition (basic and acidic residues). Residues 161 to 281 (SMKDKSRNPF…VMSHKRTAST (121 aa)) are disordered. Serine 184, serine 202, serine 206, and serine 234 each carry phosphoserine. Residues 225 to 239 (NLQKTPLSQSMSVLP) are compositionally biased toward polar residues. The segment covering 257–266 (WDEDDNEDES) has biased composition (acidic residues). 9 positions are modified to phosphoserine: serine 300, serine 315, serine 339, serine 341, serine 343, serine 345, serine 356, serine 357, and serine 382. Disordered regions lie at residues 330 to 727 (EAKG…QEVP), 741 to 782 (VGEL…ASVP), 835 to 913 (PQEL…LFRM), 969 to 993 (DERI…KSST), and 1037 to 1141 (ASVT…RVEN). Basic and acidic residues predominate over residues 419–433 (ATKEAKESKKPESRR). Serine 435 bears the Phosphoserine mark. A compositionally biased stretch (basic and acidic residues) spans 442 to 451 (GKKDVAKGSE). Residue serine 477 is modified to Phosphoserine. Positions 482–491 (DLVRRSEKDT) are enriched in basic and acidic residues. 2 positions are modified to phosphoserine: serine 529 and serine 545. Over residues 588–612 (SSESPSVFSSLSSPIAAPISTSTPI) the composition is skewed to low complexity. Polar residues predominate over residues 637-652 (QTESLTPVPNSGSSAL). Positions 698-715 (ETGRQEEELPRFPCKKQD) are enriched in basic and acidic residues. Position 758 is a phosphoserine (serine 758). The segment covering 855–866 (ESPHAEDSERES) has biased composition (basic and acidic residues). Over residues 975–986 (VEDDGDQVEDDG) the composition is skewed to acidic residues. Polar residues predominate over residues 1037 to 1048 (ASVTAPSEQTTE). Residues 1116–1131 (SDTHHTSTAESQKKAT) show a composition bias toward basic and acidic residues. Position 1135 is a phosphoserine (serine 1135). One can recognise an FIP-RBD domain in the interval 1211 to 1273 (KKYSPSDPAF…EETPNILRIP (63 aa)). The interval 1219–1283 (AFAYAQLTHD…TQVGKKAGKM (65 aa)) is necessary for interaction with RAB4A and RAB11A, subcellular location and endosomal recycling.

In terms of assembly, interacts with RAB11A (GTP-bound form); the interaction induces RAB11FIP1 recruitment to membranes. Interacts with RAB14 (GTP-bound form). Homooligomer. Isoform 2 interacts with RAB4A, RAB11A, RAB11B and RAB25. According to PubMed:15280022, RAB4A binding to RAB11FIP1 is of very low affinity in vitro and in vivo. In terms of tissue distribution, isoform 2 is expressed in brain, heart, testis, lung, spleen, ovary and small intestine.

Its subcellular location is the recycling endosome. It localises to the cytoplasmic vesicle. The protein resides in the phagosome membrane. Functionally, a Rab11 effector protein involved in the endosomal recycling process. Also involved in controlling membrane trafficking along the phagocytic pathway and in phagocytosis. Interaction with RAB14 may function in the process of neurite formation. In Homo sapiens (Human), this protein is Rab11 family-interacting protein 1.